A 310-amino-acid polypeptide reads, in one-letter code: Porphobilinogen deaminase (310 aa).

S-(dipyrrolylmethanemethyl)cysteine is present on cysteine 242.

Belongs to the HMBS family. In terms of assembly, monomer. Dipyrromethane serves as cofactor.

It catalyses the reaction 4 porphobilinogen + H2O = hydroxymethylbilane + 4 NH4(+). It participates in porphyrin-containing compound metabolism; protoporphyrin-IX biosynthesis; coproporphyrinogen-III from 5-aminolevulinate: step 2/4. Tetrapolymerization of the monopyrrole PBG into the hydroxymethylbilane pre-uroporphyrinogen in several discrete steps. This chain is Porphobilinogen deaminase, found in Shewanella halifaxensis (strain HAW-EB4).